A 131-amino-acid polypeptide reads, in one-letter code: Translation initiation factor 5A (131 aa).

Position 37 is a hypusine (K37).

Belongs to the eIF-5A family.

Its subcellular location is the cytoplasm. Its function is as follows. Functions by promoting the formation of the first peptide bond. The sequence is that of Translation initiation factor 5A (eIF5A) from Methanococcus aeolicus (strain ATCC BAA-1280 / DSM 17508 / OCM 812 / Nankai-3).